Reading from the N-terminus, the 175-residue chain is Catabolic 3-dehydroquinase (175 aa).

Tyr23 acts as the Proton acceptor in catalysis. Positions 74, 80, and 87 each coordinate substrate. The active-site Proton donor is His100. Residues 101–102 (IS) and Arg111 contribute to the substrate site.

It belongs to the type-II 3-dehydroquinase family. Homododecamer. Adopts a ring-like structure, composed of an arrangement of two hexameric rings stacked on top of one another.

It carries out the reaction 3-dehydroquinate = 3-dehydroshikimate + H2O. The protein operates within aromatic compound metabolism; 3,4-dihydroxybenzoate biosynthesis; 3,4-dihydroxybenzoate from 3-dehydroquinate: step 1/2. Functionally, is involved in the catabolism of quinate. Allows the utilization of quinate as carbon source via the beta-ketoadipate pathway. The polypeptide is Catabolic 3-dehydroquinase (Talaromyces marneffei (strain ATCC 18224 / CBS 334.59 / QM 7333) (Penicillium marneffei)).